We begin with the raw amino-acid sequence, 728 residues long: Phosphoribosylformylglycinamidine synthase subunit PurL (728 aa).

Residue H54 is part of the active site. Y57 and K96 together coordinate ATP. E98 provides a ligand contact to Mg(2+). Residues 99 to 102 (SHNH) and R121 each bind substrate. H100 functions as the Proton acceptor in the catalytic mechanism. D122 is a binding site for Mg(2+). Residue Q245 coordinates substrate. D273 contributes to the Mg(2+) binding site. Substrate is bound at residue 317 to 319 (ETQ). 2 residues coordinate ATP: D495 and G532. N533 contributes to the Mg(2+) binding site. S535 contacts substrate.

The protein belongs to the FGAMS family. In terms of assembly, monomer. Part of the FGAM synthase complex composed of 1 PurL, 1 PurQ and 2 PurS subunits.

The protein localises to the cytoplasm. It catalyses the reaction N(2)-formyl-N(1)-(5-phospho-beta-D-ribosyl)glycinamide + L-glutamine + ATP + H2O = 2-formamido-N(1)-(5-O-phospho-beta-D-ribosyl)acetamidine + L-glutamate + ADP + phosphate + H(+). It participates in purine metabolism; IMP biosynthesis via de novo pathway; 5-amino-1-(5-phospho-D-ribosyl)imidazole from N(2)-formyl-N(1)-(5-phospho-D-ribosyl)glycinamide: step 1/2. Its function is as follows. Part of the phosphoribosylformylglycinamidine synthase complex involved in the purines biosynthetic pathway. Catalyzes the ATP-dependent conversion of formylglycinamide ribonucleotide (FGAR) and glutamine to yield formylglycinamidine ribonucleotide (FGAM) and glutamate. The FGAM synthase complex is composed of three subunits. PurQ produces an ammonia molecule by converting glutamine to glutamate. PurL transfers the ammonia molecule to FGAR to form FGAM in an ATP-dependent manner. PurS interacts with PurQ and PurL and is thought to assist in the transfer of the ammonia molecule from PurQ to PurL. This Macrococcus caseolyticus (strain JCSC5402) (Macrococcoides caseolyticum) protein is Phosphoribosylformylglycinamidine synthase subunit PurL.